Reading from the N-terminus, the 329-residue chain is GTPase Obg (329 aa).

The Obg domain occupies 1–159 (MQFIDQACIS…WLLHLELKLL (159 aa)). Positions 160-328 (AEVGIIGLPN…LLKNVWEKLE (169 aa)) constitute an OBG-type G domain. Residues 166-173 (GLPNAGKS), 191-195 (FTTLI), 213-216 (DIPG), 280-283 (NKKE), and 309-311 (SAA) each bind ATP. Residues S173 and T193 each coordinate Mg(2+).

It belongs to the TRAFAC class OBG-HflX-like GTPase superfamily. OBG GTPase family. As to quaternary structure, monomer. It depends on Mg(2+) as a cofactor.

The protein localises to the cytoplasm. Its function is as follows. An essential GTPase which binds GTP, GDP and possibly (p)ppGpp with moderate affinity, with high nucleotide exchange rates and a fairly low GTP hydrolysis rate. Plays a role in control of the cell cycle, stress response, ribosome biogenesis and in those bacteria that undergo differentiation, in morphogenesis control. This chain is GTPase Obg, found in Prochlorococcus marinus (strain MIT 9211).